The sequence spans 367 residues: RNA-binding protein 48 (367 aa).

The RRM domain occupies 46–124; the sequence is QYLLIQGVPA…GLLHVCYAPE (79 aa). Disordered stretches follow at residues 217-243, 280-302, and 343-367; these read PVDR…HNDS, QLQE…QTNP, and SVPK…RRRI. Residues 347 to 357 are compositionally biased toward basic and acidic residues; sequence PPEDKPEDVHT.

The protein belongs to the RBM48 family. In terms of assembly, component of the minor spliceosome. Within this complex, interacts with ARMC7 and PRPF8/PRP8.

As a component of the minor spliceosome, involved in the splicing of U12-type introns in pre-mRNAs. The chain is RNA-binding protein 48 (RBM48) from Homo sapiens (Human).